Here is a 222-residue protein sequence, read N- to C-terminus: Abasic site processing protein YedK (222 aa).

The Nucleophile role is filled by cysteine 2. Residue cysteine 2 is modified to Thiazolidine linkage to a ring-opened DNA abasic site. Glutamate 105 is a catalytic residue.

This sequence belongs to the SOS response-associated peptidase family.

With respect to regulation, formation and reversal of DNA-protein cross-link depends on DNA context. Catalyzes formation of the thiazolidine linkage in presence of abasic sites in single-stranded DNA. Mediates the reversal of the thiazolidine cross-link in presence of double stranded DNA. Sensor of abasic sites in single-stranded DNA (ssDNA) required to preserve genome integrity by promoting error-free repair of abasic sites. Recognizes and binds abasic sites in ssDNA at replication forks and chemically modifies the lesion by forming a covalent cross-link with DNA: forms a stable thiazolidine linkage between a ring-opened abasic site and the alpha-amino and sulfhydryl substituents of its N-terminal catalytic cysteine residue. The DNA-protein cross-link is then reversed: able to catalyze the reversal of the thiazolidine cross-link and cycle between a cross-link and a non-cross-linked state depending on DNA context: mediates self-reversal of the thiazolidine cross-link in double stranded DNA. May act as a protease: mediates autocatalytic processing of its N-terminal methionine in order to expose the catalytic cysteine. The polypeptide is Abasic site processing protein YedK (Escherichia coli (strain K12)).